We begin with the raw amino-acid sequence, 167 residues long: Large ribosomal subunit protein uL10 (167 aa).

Belongs to the universal ribosomal protein uL10 family. In terms of assembly, part of the ribosomal stalk of the 50S ribosomal subunit. The N-terminus interacts with L11 and the large rRNA to form the base of the stalk. The C-terminus forms an elongated spine to which L12 dimers bind in a sequential fashion forming a multimeric L10(L12)X complex.

Forms part of the ribosomal stalk, playing a central role in the interaction of the ribosome with GTP-bound translation factors. This chain is Large ribosomal subunit protein uL10, found in Streptococcus thermophilus (strain CNRZ 1066).